Reading from the N-terminus, the 190-residue chain is NADH dehydrogenase [ubiquinone] iron-sulfur protein 3 (190 aa).

Belongs to the complex I 30 kDa subunit family. Complex I is composed of about 45 different subunits. This is a component of the iron-sulfur (IP) fragment of the enzyme.

The protein resides in the mitochondrion inner membrane. It catalyses the reaction a ubiquinone + NADH + 5 H(+)(in) = a ubiquinol + NAD(+) + 4 H(+)(out). In terms of biological role, core subunit of the mitochondrial membrane respiratory chain NADH dehydrogenase (Complex I) that is believed to belong to the minimal assembly required for catalysis. Complex I functions in the transfer of electrons from NADH to the respiratory chain. The immediate electron acceptor for the enzyme is believed to be ubiquinone. This is NADH dehydrogenase [ubiquinone] iron-sulfur protein 3 (NAD9) from Oryza sativa subsp. japonica (Rice).